A 61-amino-acid polypeptide reads, in one-letter code: Large ribosomal subunit protein eL37 (61 aa).

The Zn(2+) site is built by C19, C22, C34, and C37. The C4-type zinc-finger motif lies at 19-37 (CRRCGRNSFNVRKGYCAAC).

Belongs to the eukaryotic ribosomal protein eL37 family. Requires Zn(2+) as cofactor.

Binds to the 23S rRNA. The polypeptide is Large ribosomal subunit protein eL37 (rpl37e) (Sulfurisphaera tokodaii (strain DSM 16993 / JCM 10545 / NBRC 100140 / 7) (Sulfolobus tokodaii)).